A 430-amino-acid polypeptide reads, in one-letter code: Tyrosine--tRNA ligase (430 aa).

Residue Y32 participates in L-tyrosine binding. The 'HIGH' region motif lies at 37–46; it reads PTADSLHIGH. L-tyrosine contacts are provided by Y172 and Q176. A 'KMSKS' region motif is present at residues 232–236; it reads KFGKT. K235 is a binding site for ATP. The S4 RNA-binding domain occupies 362 to 430; the sequence is ISLVDLLADA…KKSYYLIIVE (69 aa).

It belongs to the class-I aminoacyl-tRNA synthetase family. TyrS type 1 subfamily. Homodimer.

Its subcellular location is the cytoplasm. It carries out the reaction tRNA(Tyr) + L-tyrosine + ATP = L-tyrosyl-tRNA(Tyr) + AMP + diphosphate + H(+). Functionally, catalyzes the attachment of tyrosine to tRNA(Tyr) in a two-step reaction: tyrosine is first activated by ATP to form Tyr-AMP and then transferred to the acceptor end of tRNA(Tyr). The protein is Tyrosine--tRNA ligase of Porphyromonas gingivalis (strain ATCC 33277 / DSM 20709 / CIP 103683 / JCM 12257 / NCTC 11834 / 2561).